The following is a 1807-amino-acid chain: Triacetic acid lactone synthase cle1 (1807 aa).

One can recognise a Starter acyltransferase (SAT) domain in the interval 107-280 (LAPLTVIIHI…ANVPVNGRYH (174 aa)). The 411-residue stretch at 385-795 (DTSIAIIGAA…GNNTAIIICQ (411 aa)) folds into the Ketosynthase family 3 (KS3) domain. Catalysis depends on for beta-ketoacyl synthase activity residues cysteine 540, histidine 675, and histidine 718. The 258-residue stretch at 919 to 1176 (SKAVYDSSYH…LGPCIWLEAG (258 aa)) folds into the Malonyl-CoA:ACP transacylase (MAT) domain. Residues 1272–1398 (PVIDGLISLE…GTVIVDDERT (127 aa)) are N-terminal hotdog fold. The PKS/mFAS DH domain maps to 1272 to 1573 (PVIDGLISLE…FIRTSTSALQ (302 aa)). Catalysis depends on histidine 1304, which acts as the Proton acceptor; for dehydratase activity. Residues 1416–1573 (TVFSAPRGVA…FIRTSTSALQ (158 aa)) are C-terminal hotdog fold. Aspartate 1475 (proton donor; for dehydratase activity) is an active-site residue. Residues 1605 to 1679 (ANVWSLTVNL…IICERITAQT (75 aa)) enclose the Carrier 1 domain. Residue serine 1639 is modified to O-(pantetheine 4'-phosphoryl)serine. The segment at 1690-1720 (GNSTSNTTSSSSQCTPSSSFESDSDTQATEL) is disordered. A compositionally biased stretch (low complexity) spans 1692–1710 (STSNTTSSSSQCTPSSSFE). The region spanning 1721–1797 (SLSAPTMEKV…DLHALVMRRG (77 aa)) is the Carrier 2 domain. O-(pantetheine 4'-phosphoryl)serine is present on serine 1757.

The cofactor is pantetheine 4'-phosphate.

Its pathway is secondary metabolite biosynthesis; terpenoid biosynthesis. In terms of biological role, non-reducing polyketide synthase; part of the cluster A that mediates the biosynthesis of chevalone E and its oxidized derivatives that possess a unique five-membered lactone ring and can synergistically enhance the cytotoxicity of doxorubicin (DOX) in breast cancer cells. Within the pathway, cle1 takes part to the biosynthesis of the molecular scaffold via the synthesis the alpha-pyrone triacetic acid lactone (TAL) from one molecule of acetyl-CoA and two molecules of malonyl-CoA. The molecular scaffold is commonly biosynthesized by a series of enzymes including the non-reducing polyketide synthase (NR-PKS) cle1 that produces the alpha-pyrone triacetic acid lactone (TAL); The membrane-bound prenyltransferase cle5 that accepts TAL as its substrate to perform a C-3 geranylgeranylation reaction, in which the pathway-dedicated GGPS cle6 is required to provide GGPP, the other substrate of cle5; the FAD-dependent monooxygenase Cle3 that forms an (S)-epoxide ring at the terminal olefin of the geranylgeranyl group; and the terpene cyclase Cle7 that catalyzes the cyclization of the prenyl group that yields the pentacyclic pathway intermediate chevalone E. Chevalone E can derivatize into seven new oxidized analogs by the cytochrome P450 monooxygenases cle2 (acting at C-20) and cle4 (acting at C-11 and C-12). This is Triacetic acid lactone synthase cle1 from Aspergillus versicolor.